Here is a 767-residue protein sequence, read N- to C-terminus: Ribonucleoside-diphosphate reductase large subunit (767 aa).

Residues Thr176, 191 to 192 (SC), Gly222, 392 to 396 (NLCAE), and 578 to 582 (PTAGT) each bind substrate. Cys192 and Cys408 are disulfide-bonded. Asn392 (proton acceptor) is an active-site residue. The active-site Cysteine radical intermediate is the Cys394. Glu396 functions as the Proton acceptor in the catalytic mechanism.

The protein belongs to the ribonucleoside diphosphate reductase large chain family. In terms of assembly, heterotetramer composed of a homodimer of the large subunit (R1) and a homodimer of the small subunit (R2). Larger multisubunit protein complex are also active, composed of (R1)n(R2)n.

The catalysed reaction is a 2'-deoxyribonucleoside 5'-diphosphate + [thioredoxin]-disulfide + H2O = a ribonucleoside 5'-diphosphate + [thioredoxin]-dithiol. Its function is as follows. Ribonucleoside-diphosphate reductase holoenzyme provides the precursors necessary for viral DNA synthesis. Allows virus growth in non-dividing cells, as well as reactivation from latency in infected hosts. Catalyzes the biosynthesis of deoxyribonucleotides from the corresponding ribonucleotides. The sequence is that of Ribonucleoside-diphosphate reductase large subunit from Saimiri sciureus (Common squirrel monkey).